The following is a 230-amino-acid chain: MTEAAPKVGLLRGRFITFEGGEGSGKSTQINILAERLNAAKLRAIVTREPGGSPGAEIIRHLVLSGMGKLLGAYAETLLFAAARDDHVHTVIKPALEQGIWVLCDRFADSTRAYQGRLGDVLPGVLNALERVTIGDLKPDLTVILDVPVEIGMQRAAVRRGSGAPDRFEAEDVAFHQKLRDAYRDIAASDPQRCVVIDANADVNTVAAGVWAALRDRVLVADSSTKVTRA.

20–27 (GGEGSGKS) provides a ligand contact to ATP.

The protein belongs to the thymidylate kinase family.

The catalysed reaction is dTMP + ATP = dTDP + ADP. In terms of biological role, phosphorylation of dTMP to form dTDP in both de novo and salvage pathways of dTTP synthesis. In Nitrobacter hamburgensis (strain DSM 10229 / NCIMB 13809 / X14), this protein is Thymidylate kinase.